We begin with the raw amino-acid sequence, 227 residues long: uncharacterized protein (227 aa).

Residues 52 to 100 adopt a coiled-coil conformation; sequence NKRAKLYRERNKAKLKEKQHKWYHKGGGKEHKKLYDKINLEKSNMRDKN.

It belongs to the mimivirus L246/L426 family.

This is an uncharacterized protein from Acanthamoeba polyphaga mimivirus (APMV).